A 98-amino-acid polypeptide reads, in one-letter code: MRTYEIMYVVRPNIEEDAKKAVVERFNGILASEGSEVLEEKDWGKRRLAYEIEDFKEGFYNIVRIKTDNNRATDEFQRLAKISDDIIRYIVIREDQDK.

This sequence belongs to the bacterial ribosomal protein bS6 family.

Its function is as follows. Binds together with bS18 to 16S ribosomal RNA. The sequence is that of Small ribosomal subunit protein bS6 from Staphylococcus haemolyticus (strain JCSC1435).